The primary structure comprises 252 residues: 3-dehydroquinate dehydratase (252 aa).

3-dehydroquinate contacts are provided by residues Ser-21, 46 to 48 (EWR), and Arg-82. His-143 functions as the Proton donor/acceptor in the catalytic mechanism. Lys-170 (schiff-base intermediate with substrate) is an active-site residue. Residues Arg-213, Ser-232, and Gln-236 each coordinate 3-dehydroquinate.

It belongs to the type-I 3-dehydroquinase family. As to quaternary structure, homodimer.

The catalysed reaction is 3-dehydroquinate = 3-dehydroshikimate + H2O. Its pathway is metabolic intermediate biosynthesis; chorismate biosynthesis; chorismate from D-erythrose 4-phosphate and phosphoenolpyruvate: step 3/7. Functionally, involved in the third step of the chorismate pathway, which leads to the biosynthesis of aromatic amino acids. Catalyzes the cis-dehydration of 3-dehydroquinate (DHQ) and introduces the first double bond of the aromatic ring to yield 3-dehydroshikimate. The protein is 3-dehydroquinate dehydratase of Salmonella dublin (strain CT_02021853).